A 241-amino-acid polypeptide reads, in one-letter code: Proteasome subunit alpha (241 aa).

This sequence belongs to the peptidase T1A family. In terms of assembly, the 20S proteasome core is composed of 14 alpha and 14 beta subunits that assemble into four stacked heptameric rings, resulting in a barrel-shaped structure. The two inner rings, each composed of seven catalytic beta subunits, are sandwiched by two outer rings, each composed of seven alpha subunits. The catalytic chamber with the active sites is on the inside of the barrel. Has a gated structure, the ends of the cylinder being occluded by the N-termini of the alpha-subunits. Is capped at one or both ends by the proteasome regulatory ATPase, PAN.

It localises to the cytoplasm. Its activity is regulated as follows. The formation of the proteasomal ATPase PAN-20S proteasome complex, via the docking of the C-termini of PAN into the intersubunit pockets in the alpha-rings, triggers opening of the gate for substrate entry. Interconversion between the open-gate and close-gate conformations leads to a dynamic regulation of the 20S proteasome proteolysis activity. Its function is as follows. Component of the proteasome core, a large protease complex with broad specificity involved in protein degradation. The polypeptide is Proteasome subunit alpha (Methanosphaerula palustris (strain ATCC BAA-1556 / DSM 19958 / E1-9c)).